The following is a 295-amino-acid chain: MPSPRRSMEGRPLGVSASSSSSSPGSPAHGGGGGGSRFEFQSLLSSRATAVDPTCARLRASESPVHRRGSFPLAAAGPSQSPAPPLPEEDRMDLNPSFLGIALRSLLAIDLWLSKKLGVCAGESSSWGSVRPLMKLLEISGHGIPWLLGTLYCLCRSDSWAGREVLMNLLFALLLDLLLVALIKGLVRRRRPAHNQMDMFVTLSVDKYSFPSGHATRAALMSRFILNHLVLAIPLRVLVVLWAFVLGLSRVMLGRHNVTDVAFGFFLGYMQYSIVDYCWLSPHNAPVLFLLWSQR.

Disordered regions lie at residues 1–39 (MPSPRRSMEGRPLGVSASSSSSSPGSPAHGGGGGGSRFE) and 61–90 (SESPVHRRGSFPLAAAGPSQSPAPPLPEED). The Cytoplasmic portion of the chain corresponds to 1-132 (MPSPRRSMEG…ESSSWGSVRP (132 aa)). Over residues 16-27 (SASSSSSSPGSP) the composition is skewed to low complexity. 3 positions are modified to phosphoserine: S26, S36, and S70. Residues 133–153 (LMKLLEISGHGIPWLLGTLYC) traverse the membrane as a helical segment. Residues 154–164 (LCRSDSWAGRE) lie on the Lumenal side of the membrane. The helical transmembrane segment at 165–185 (VLMNLLFALLLDLLLVALIKG) threads the bilayer. Residues 184 to 192 (KGLVRRRRP) are phosphatase sequence motif I. The Cytoplasmic segment spans residues 186-228 (LVRRRRPAHNQMDMFVTLSVDKYSFPSGHATRAALMSRFILNH). Positions 211 to 214 (PSGH) are phosphatase sequence motif II. The Proton donors role is filled by H214. The helical transmembrane segment at 229 to 249 (LVLAIPLRVLVVLWAFVLGLS) threads the bilayer. Positions 249-260 (SRVMLGRHNVTD) are phosphatase sequence motif III. The Lumenal segment spans residues 250–260 (RVMLGRHNVTD). H256 (nucleophile) is an active-site residue. The helical transmembrane segment at 261-281 (VAFGFFLGYMQYSIVDYCWLS) threads the bilayer. Residues 282 to 295 (PHNAPVLFLLWSQR) lie on the Cytoplasmic side of the membrane.

Belongs to the PA-phosphatase related phosphoesterase family. Post-translationally, phosphorylation by PKC activates the phosphatase activity towards presqualene diphosphate. In terms of tissue distribution, widely expressed. Expressed in most organs, in particular gastrointestinal organs, spleen, placenta, kidney, thymus and brain.

Its subcellular location is the endoplasmic reticulum membrane. The protein resides in the nucleus envelope. It is found in the nucleus inner membrane. It carries out the reaction presqualene diphosphate + H2O = presqualene phosphate + phosphate + H(+). The enzyme catalyses presqualene phosphate + H2O = presqualene alcohol + phosphate. The catalysed reaction is (2E,6E)-farnesyl diphosphate + H2O = (2E,6E)-farnesyl phosphate + phosphate + H(+). It catalyses the reaction (2E,6E)-farnesyl phosphate + H2O = (2E,6E)-farnesol + phosphate. It carries out the reaction (2E,6E,10E)-geranylgeranyl diphosphate + H2O = (2E,6E,10E)-geranylgeranyl phosphate + phosphate + H(+). The enzyme catalyses (2E,6E,10E)-geranylgeranyl phosphate + H2O = (2E,6E,10E)-geranylgeraniol + phosphate. The catalysed reaction is (2E)-geranyl diphosphate + H2O = (2E)-geranyl phosphate + phosphate + H(+). It catalyses the reaction (2E)-geranyl phosphate + H2O = (2E)-geraniol + phosphate. It carries out the reaction 1,2-dihexadecanoyl-sn-glycero-3-phosphate + H2O = 1,2-dihexadecanoyl-sn-glycerol + phosphate. Its activity is regulated as follows. Inhibited by propranolol. Not inhibited by N-ethylmaleimide or bromoenolactome. Functionally, magnesium-independent polyisoprenoid diphosphatase that catalyzes the sequential dephosphorylation of presqualene, farnesyl, geranyl and geranylgeranyl diphosphates. Functions in the innate immune response through the dephosphorylation of presqualene diphosphate which acts as a potent inhibitor of the signaling pathways contributing to polymorphonuclear neutrophils activation. May regulate the biosynthesis of cholesterol and related sterols by dephosphorylating presqualene and farnesyl diphosphate, two key intermediates in this biosynthetic pathway. May also play a role in protein prenylation by acting on farnesyl diphosphate and its derivative geranylgeranyl diphosphate, two precursors for the addition of isoprenoid anchors to membrane proteins. Has a lower activity towards phosphatidic acid (PA), but through phosphatidic acid dephosphorylation may participate in the biosynthesis of phospholipids and triacylglycerols. May also act on ceramide-1-P, lysophosphatidic acid (LPA) and sphing-4-enine 1-phosphate/sphingosine-1-phosphate. In Homo sapiens (Human), this protein is Polyisoprenoid diphosphate/phosphate phosphohydrolase PLPP6.